The primary structure comprises 169 residues: E1B protein, small T-antigen (169 aa).

The protein belongs to the adenoviridae E1B 19 kDa protein family.

The polypeptide is E1B protein, small T-antigen (Canis lupus familiaris (Dog)).